We begin with the raw amino-acid sequence, 156 residues long: MAKKHPQKPANLIAQNKKAGHDYNILETFEAGLVLTGTEIKSVRKGKISLRDGFARVRRGEAYLENVHISPYEQGNQFNHDPLRNRKLLLHKKEIAKIGALTKDKGITIVPLRVYLKHGFAKVLIGVGEGKREYDKRETLKRKEQDREMARALRKR.

Residues tyrosine 134–arginine 156 are disordered.

The protein belongs to the SmpB family.

The protein resides in the cytoplasm. In terms of biological role, required for rescue of stalled ribosomes mediated by trans-translation. Binds to transfer-messenger RNA (tmRNA), required for stable association of tmRNA with ribosomes. tmRNA and SmpB together mimic tRNA shape, replacing the anticodon stem-loop with SmpB. tmRNA is encoded by the ssrA gene; the 2 termini fold to resemble tRNA(Ala) and it encodes a 'tag peptide', a short internal open reading frame. During trans-translation Ala-aminoacylated tmRNA acts like a tRNA, entering the A-site of stalled ribosomes, displacing the stalled mRNA. The ribosome then switches to translate the ORF on the tmRNA; the nascent peptide is terminated with the 'tag peptide' encoded by the tmRNA and targeted for degradation. The ribosome is freed to recommence translation, which seems to be the essential function of trans-translation. The polypeptide is SsrA-binding protein (Latilactobacillus sakei subsp. sakei (strain 23K) (Lactobacillus sakei subsp. sakei)).